We begin with the raw amino-acid sequence, 362 residues long: Homeobox protein extradenticle (362 aa).

In terms of domain architecture, PBC spans 34 to 225; that stretch reads PRKQDIGEIL…VMILRSRFLD (192 aa). The tract at residues 41 to 120 is PBC-A; it reads EILQQIMNIT…EGVAGPEKGG (80 aa). The segment at 123–225 is PBC-B; sequence DFLSQSDLTG…VMILRSRFLD (103 aa). The homeobox; TALE-type DNA-binding region spans 226 to 288; sequence ARRKRRNFSK…NKRIRYKKNI (63 aa). A disordered region spans residues 305 to 362; sequence GASPYSMGGPPSGAATPMMSPAPAQDSMGYSLGSGGYDQQQPYDGSMGYDQLHQDLSP.

The protein belongs to the TALE/PBX homeobox family.

It localises to the nucleus. Transcription factor which acts with the selector homeodomain proteins altering the regulation of downstream target genes such as wingless (wg), teashirt (tsh) and decapentaplegic (dpp), thus affecting segmental identity. This chain is Homeobox protein extradenticle, found in Anopheles gambiae (African malaria mosquito).